A 316-amino-acid chain; its full sequence is Polyprenyl transferase prhE (316 aa).

9 helical membrane-spanning segments follow: residues 45–65 (VVGVAYTAAISPVTLPSTFLL), 69–89 (VILSLWGFCIRSAGCAWNDLI), 114–134 (GAALLAAFMFGCGGSLLLLLP), 135–155 (SQCAFEAAIVVFFALLYPFGK), 163–183 (LILTNIAWAIPMAMSSLDMSP), 188–208 (IPTLAMSFSIASVIVMIDIVY), 231–253 (ITDQIAYGLFFSGTLSLLVGGIL), 257–276 (GFPFLIFSVGGHFLGFLRFL), and 296–316 (SCLLATMLLVFGLCFEYCVRL).

It belongs to the UbiA prenyltransferase family. Mg(2+) serves as cofactor.

It is found in the membrane. The catalysed reaction is 3,5-dimethylorsellinate + (2E,6E)-farnesyl diphosphate = (3R)-3-farnesyl-6-hydroxy-2,3,5-trimethyl-4-oxocyclohexa-1,5-diene-1-carboxylate + diphosphate + H(+). Its pathway is secondary metabolite biosynthesis; terpenoid biosynthesis. Functionally, polyprenyl transferase; part of the gene cluster that mediates the biosynthesis of paraherquonin, a meroterpenoid with a unique, highly congested hexacyclic molecular architecture. The first step of the pathway is the synthesis of 3,5-dimethylorsellinic acid (DMOA) by the polyketide synthase prhL. Synthesis of DMOA is followed by farnesylation by the prenyltransferase prhE, methylesterification by the methyl-transferase prhM, epoxidation of the prenyl chain by the flavin-dependent monooxygenase prhF, and cyclization of the farnesyl moiety by the terpene cyclase prhH, to yield the tetracyclic intermediate, protoaustinoid A. The short chain dehydrogenase prhI then oxidizes the C-3 alcohol group of the terpene cyclase product to transform protoaustinoid A into protoaustinoid B. The FAD-binding monooxygenase prhJ catalyzes the oxidation of protoaustinoid B into preaustinoid A which is further oxidized into preaustinoid A1 by FAD-binding monooxygenase phrK. Finally, prhA leads to berkeleydione via the berkeleyone B intermediate. PrhA is a multifunctional dioxygenase that first desaturates at C5-C6 to form berkeleyone B, followed by rearrangement of the A/B-ring to form the cycloheptadiene moiety in berkeleydione. Berkeleydione serves as the key intermediate for the biosynthesis of paraherquonin as well as many other meroterpenoids. The cytochrome P450 monooxygenases prhB, prhD, and prhN, as well as the isomerase prhC, are probably involved in the late stage of paraherquonin biosynthesis, after the production of berkeleydione. Especially prhC might be a multifunctional enzyme that catalyzes the D-ring expansion via intramolecular methoxy rearrangement, as well as the hydrolysis of the expanded D-ring. This is Polyprenyl transferase prhE from Penicillium brasilianum.